The sequence spans 773 residues: Polymeric immunoglobulin receptor (773 aa).

A signal peptide spans 1–18 (MALFLLTCLLAVFSAATA). Residues 19–647 (QSSLLGPSSI…SASGQSGSAK (629 aa)) are Extracellular-facing. The region spanning 25–131 (PSSIFGPGEV…RGLDFGVNVL (107 aa)) is the Ig-like V-type 1; required for binding to polymeric IgA and IgM domain. Disulfide bonds link C46–C115, C155–C225, C260–C324, C369–C438, and C478–C538. N-linked (GlcNAc...) asparagine; in variant N-88 glycosylation occurs at K88. N-linked (GlcNAc...) asparagine glycosylation occurs at N108. Ig-like V-type domains follow at residues 138–232 (PDDV…SDPT), 233–340 (AEEQ…TQLR), 352–455 (RSPP…LQIV), and 461–557 (PTID…VELT). An N-linked (GlcNAc...) asparagine glycan is attached at N418. Residues 619–641 (AVQSAEDPASGSRASVDASSASG) are disordered. Residues 632–641 (ASVDASSASG) are compositionally biased toward low complexity. A helical membrane pass occupies residues 648 to 670 (VLISTLVPLGLVLAAGAMAVAIA). The Cytoplasmic portion of the chain corresponds to 671–773 (RARHRRNVDR…AEHQDGPKEA (103 aa)). A phosphoserine mark is found at S682, S691, S698, and S744. The disordered stretch occupies residues 725 to 746 (ATATESTVEIEEPKKAKRSSKE). Residues 735–746 (EEPKKAKRSSKE) are compositionally biased toward basic and acidic residues.

As to quaternary structure, interacts (mainly via CDR1-like domain) with dimeric IgA. Interacts (mainly via CDR2-like domain) with pentameric IgM. In terms of assembly, either free or part of the secretory IgA (sIgA) complex that consists of two, four or five IgA monomers, and two additional non-Ig polypeptides, namely the JCHAIN and the secretory component (the proteolytic product of PIGR). Free secretory component interacts with bacterial antigens toxA of C.difficile and eae of E.coli. N-glycosylated. N-glycosylation is required for anchoring IgA molecules to mucus, but is not necessary for Ig binding.

The protein resides in the cell membrane. The protein localises to the secreted. Functionally, mediates selective transcytosis of polymeric IgA and IgM across mucosal epithelial cells. Binds polymeric IgA and IgM at the basolateral surface of epithelial cells. The complex is then transported across the cell to be secreted at the apical surface. During this process, a cleavage occurs that separates the extracellular (known as the secretory component) from the transmembrane segment. Its function is as follows. Through its N-linked glycans ensures anchoring of secretory IgA (sIgA) molecules to mucus lining the epithelial surface to neutralize extracellular pathogens. On its own (free form) may act as a non-specific microbial scavenger to prevent pathogen interaction with epithelial cells. The protein is Polymeric immunoglobulin receptor (PIGR) of Oryctolagus cuniculus (Rabbit).